A 94-amino-acid polypeptide reads, in one-letter code: Co-chaperonin GroES (94 aa).

Belongs to the GroES chaperonin family. In terms of assembly, heptamer of 7 subunits arranged in a ring. Interacts with the chaperonin GroEL.

The protein localises to the cytoplasm. Its function is as follows. Together with the chaperonin GroEL, plays an essential role in assisting protein folding. The GroEL-GroES system forms a nano-cage that allows encapsulation of the non-native substrate proteins and provides a physical environment optimized to promote and accelerate protein folding. GroES binds to the apical surface of the GroEL ring, thereby capping the opening of the GroEL channel. This Ruminiclostridium cellulolyticum (strain ATCC 35319 / DSM 5812 / JCM 6584 / H10) (Clostridium cellulolyticum) protein is Co-chaperonin GroES.